The chain runs to 551 residues: Cu(2+) suppressing and bleomycin sensitive protein 1 (551 aa).

Coiled coils occupy residues 174-213 (REIDNERKKNKIEEDLLLRAKLKHCKDEYDILEGKLEEID) and 249-300 (NSLL…DSGK). Positions 513–551 (EEKAQNSTSSDGSDDDDNGESGIDSNSNDSEPESEYQQE) are disordered. The span at 532 to 541 (ESGIDSNSND) shows a compositional bias: low complexity. The span at 542–551 (SEPESEYQQE) shows a compositional bias: acidic residues.

Belongs to the CUB1 family. As to quaternary structure, monomer. In terms of processing, phosphorylated by PKA in vitro.

It is found in the cytoplasm. It localises to the nucleus. Its function is as follows. Involved in bleomycin tolerance with links to DNA repair and/or proteasome function. The sequence is that of Cu(2+) suppressing and bleomycin sensitive protein 1 (CUB1) from Saccharomyces cerevisiae (strain ATCC 204508 / S288c) (Baker's yeast).